Here is a 414-residue protein sequence, read N- to C-terminus: 2,3-diketo-5-methylthiopentyl-1-phosphate enolase (414 aa).

The active-site Proton acceptor is K99. Substrate is bound by residues K148, 174-177 (KDDE), H265, G338, and 360-361 (GG). K174, D176, and E177 together coordinate Mg(2+). N6-carboxylysine is present on K174.

It belongs to the RuBisCO large chain family. Type IV subfamily. In terms of assembly, homodimer. It depends on Mg(2+) as a cofactor.

It catalyses the reaction 5-methylsulfanyl-2,3-dioxopentyl phosphate = 2-hydroxy-5-methylsulfanyl-3-oxopent-1-enyl phosphate. The protein operates within amino-acid biosynthesis; L-methionine biosynthesis via salvage pathway; L-methionine from S-methyl-5-thio-alpha-D-ribose 1-phosphate: step 3/6. In terms of biological role, catalyzes the enolization of 2,3-diketo-5-methylthiopentyl-1-phosphate (DK-MTP-1-P) into 2-hydroxy-3-keto-5-methylthiopentenyl-1-phosphate (HK-MTPenyl-1-P). The sequence is that of 2,3-diketo-5-methylthiopentyl-1-phosphate enolase from Bacillus cereus (strain Q1).